A 138-amino-acid polypeptide reads, in one-letter code: uncharacterized protein (138 aa).

An HTH merR-type domain is found at 3–72; sequence LYSISKAAEK…LEDINEFVKD (70 aa). Positions 6 to 25 form a DNA-binding region, H-T-H motif; that stretch reads ISKAAEKTSISSYTLRYYEK.

This is an uncharacterized protein from Bacillus subtilis (strain 168).